The sequence spans 382 residues: MTAQLNKVRKAIINGCNPAMISDLLDDLQDKHVLKDYEVEHINKKNNTSRDRCRDMIDSVKKKGEYSSNILLESLVKNHKTLAESLGLHEHAPSPIQEHNEDTIKDKEINSVIPCSAEEFKNIYDSHGDKIYEVREREGRKRLALIICNETFQSMSERRGAKLDLEGMNKLLNELGYQVQQHTNLTKAEMVKAMKEFAAREEHADSDSTFIVLMSHGDKPGVCGTDSKKTENGQYGVTNLLQVDEIFSTFNNVNCSRLWDKPKVIIIQACRGENQGGELVRDDVAPAPLEDDAVHHVQTETDSICFYSSTPDTASWRNPTKGSVFIIRLIEKMNELAHCQPLGDIFLEVQSSFKDKSPNQYSQMPTQERSTMTKKFYLFPGY.

A propeptide spanning residues 1–98 is cleaved from the precursor; sequence MTAQLNKVRK…HEHAPSPIQE (98 aa). Active-site residues include histidine 216 and cysteine 270. Positions 283-292 are excised as a propeptide; it reads DVAPAPLEDD.

It belongs to the peptidase C14A family. As to quaternary structure, heterotetramer that consists of two anti-parallel arranged heterodimers, each one formed by a 20 kDa (Caspase-1 subunit p20) and a 10 kDa (Caspase-1 subunit p10) subunit. In terms of assembly, heterotetramer that consists of two anti-parallel arranged heterodimers, each one formed by a 20 kDa (Caspase-1 subunit p20) and a 10 kDa (Caspase-1 subunit p10) subunit. Can form a heterodimer with isoform epsilon which then has an inhibitory effect. In terms of processing, the two subunits are derived from the precursor sequence by an autocatalytic mechanism.

It localises to the cytoplasm. The protein localises to the cell membrane. The catalysed reaction is Strict requirement for an Asp residue at position P1 and has a preferred cleavage sequence of Tyr-Val-Ala-Asp-|-.. Functionally, thiol protease involved in a variety of inflammatory processes by proteolytically cleaving other proteins, such as the precursors of the inflammatory cytokines interleukin-1 beta (IL1B) and interleukin 18 (IL18) as well as the pyroptosis inducer Gasdermin-D (GSDMD), into active mature peptides. Plays a key role in cell immunity as an inflammatory response initiator: once activated through formation of an inflammasome complex, it initiates a pro-inflammatory response through the cleavage of the two inflammatory cytokines IL1B and IL18, releasing the mature cytokines which are involved in a variety of inflammatory processes. Cleaves a tetrapeptide after an Asp residue at position P1. Also initiates pyroptosis, a programmed lytic cell death pathway, through cleavage of GSDMD. The polypeptide is Caspase-1-B (casp1-b) (Xenopus laevis (African clawed frog)).